The following is a 390-amino-acid chain: S-adenosylmethionine synthase 2 (390 aa).

Glutamate 9 is a Mg(2+) binding site. Residue histidine 15 coordinates ATP. Position 43 (glutamate 43) interacts with K(+). Residues glutamate 56 and glutamine 99 each contribute to the L-methionine site. ATP is bound by residues 167 to 169 (DGK), 235 to 238 (SGRF), aspartate 246, 252 to 253 (RK), alanine 269, lysine 273, and lysine 277. Residue aspartate 246 coordinates L-methionine. An L-methionine-binding site is contributed by lysine 277.

Belongs to the AdoMet synthase family. As to quaternary structure, homotetramer. It depends on Mn(2+) as a cofactor. The cofactor is Mg(2+). Co(2+) is required as a cofactor. Requires K(+) as cofactor.

The protein localises to the cytoplasm. It carries out the reaction L-methionine + ATP + H2O = S-adenosyl-L-methionine + phosphate + diphosphate. It participates in amino-acid biosynthesis; S-adenosyl-L-methionine biosynthesis; S-adenosyl-L-methionine from L-methionine: step 1/1. Its function is as follows. Catalyzes the formation of S-adenosylmethionine from methionine and ATP. The reaction comprises two steps that are both catalyzed by the same enzyme: formation of S-adenosylmethionine (AdoMet) and triphosphate, and subsequent hydrolysis of the triphosphate. This is S-adenosylmethionine synthase 2 (SAM2) from Actinidia chinensis var. chinensis (Chinese soft-hair kiwi).